We begin with the raw amino-acid sequence, 619 residues long: 1-deoxy-D-xylulose-5-phosphate synthase (619 aa).

Thiamine diphosphate contacts are provided by residues His63 and 104–106 (GHS). Position 136 (Asp136) interacts with Mg(2+). Residues 137–138 (GS), Asn165, Tyr272, and Glu353 contribute to the thiamine diphosphate site. Asn165 serves as a coordination point for Mg(2+).

The protein belongs to the transketolase family. DXPS subfamily. In terms of assembly, homodimer. Mg(2+) serves as cofactor. Requires thiamine diphosphate as cofactor.

It carries out the reaction D-glyceraldehyde 3-phosphate + pyruvate + H(+) = 1-deoxy-D-xylulose 5-phosphate + CO2. It participates in metabolic intermediate biosynthesis; 1-deoxy-D-xylulose 5-phosphate biosynthesis; 1-deoxy-D-xylulose 5-phosphate from D-glyceraldehyde 3-phosphate and pyruvate: step 1/1. Functionally, catalyzes the acyloin condensation reaction between C atoms 2 and 3 of pyruvate and glyceraldehyde 3-phosphate to yield 1-deoxy-D-xylulose-5-phosphate (DXP). The chain is 1-deoxy-D-xylulose-5-phosphate synthase from Wolinella succinogenes (strain ATCC 29543 / DSM 1740 / CCUG 13145 / JCM 31913 / LMG 7466 / NCTC 11488 / FDC 602W) (Vibrio succinogenes).